Reading from the N-terminus, the 292-residue chain is tRNA dimethylallyltransferase (292 aa).

ATP is bound at residue Gly10–Ser17. Thr12–Ser17 lines the substrate pocket. 2 interaction with substrate tRNA regions span residues Asp35–Gln38 and Gln159–Arg163.

Belongs to the IPP transferase family. In terms of assembly, monomer. Requires Mg(2+) as cofactor.

The enzyme catalyses adenosine(37) in tRNA + dimethylallyl diphosphate = N(6)-dimethylallyladenosine(37) in tRNA + diphosphate. Catalyzes the transfer of a dimethylallyl group onto the adenine at position 37 in tRNAs that read codons beginning with uridine, leading to the formation of N6-(dimethylallyl)adenosine (i(6)A). This chain is tRNA dimethylallyltransferase, found in Chelativorans sp. (strain BNC1).